The primary structure comprises 116 residues: Ly-6/neurotoxin-like protein 1 (116 aa).

The N-terminal stretch at 1-20 (MTHLLTVFLVALMGLPVAQA) is a signal peptide. Residues 21 to 104 (LECHVCAYNG…GFATPVTLAL (84 aa)) form the UPAR/Ly6 domain. 5 disulfides stabilise this stretch: Cys23/Cys46, Cys26/Cys33, Cys39/Cys64, Cys68/Cys85, and Cys86/Cys91. A lipid anchor (GPI-anchor amidated asparagine) is attached at Asn92. A propeptide spans 93–116 (GAGFATPVTLALVPALLATFWSLL) (removed in mature form).

Interacts with nAChRs containing alpha-4:beta-2 (CHRNA4:CHRNB2) and alpha-7 (CHRNA7) subunits. Interacts with CHRNA4 probably in the endoplasmic reticulum prior to nAChR pentameric assembly. Interacts with KCNA2/Potassium voltage-gated channel subfamily A member 2. Expressed in neurons of multiple regions in the CNS, including the cerebral cortex, thalamus, substantia nigra, cerebellum, amygdala and hippocampus. Also expressed in kidney, heart and thymus, but at lower levels than in the brain. Expressed in the primary visual cortex (V1) and the lateral geniculate nucleus (at protein level).

The protein localises to the cell membrane. Its subcellular location is the cell projection. The protein resides in the dendrite. It is found in the endoplasmic reticulum. Its function is as follows. Acts in different tissues through interaction to nicotinic acetylcholine receptors (nAChRs). The proposed role as modulator of nAChR activity seems to be dependent on the nAChR subtype and stoichiometry, and to involve an effect on nAChR trafficking and its cell surface expression, and on single channel properties of the nAChR inserted in the plasma membrane. Modulates functional properties of nicotinic acetylcholine receptors (nAChRs) to prevent excessive excitation, and hence neurodegeneration. Enhances desensitization by increasing both the rate and extent of desensitization of alpha-4:beta-2-containing nAChRs and slowing recovery from desensitization. Promotes large amplitude ACh-evoked currents through alpha-4:beta-2 nAChRs. Is involved in regulation of the nAChR pentameric assembly in the endoplasmic reticulum. Shifts stoichiometry from high sensitivity alpha-4(2):beta-2(3) to low sensitivity alpha-4(3):beta-2(2) nAChR. In vitro modulates alpha-3:beta-4-containing nAChRs. Reduces cell surface expression of (alpha-3:beta-4)(2):beta-4 and (alpha-3:beta-4)(2):alpha-5 nAChRs suggesting an interaction with nAChR alpha-3(-):(+)beta-4 subunit interfaces and an allosteric mode. Corresponding single channel effects characterized by decreased unitary conductance, altered burst proportions and enhanced desensitization/inactivation seem to depend on nAChR alpha:alpha subunit interfaces and are greater in (alpha-3:beta-2)(2):alpha-3 when compared to (alpha-3:beta-2)(2):alpha-5 nAChRs. Prevents plasticity in the primary visual cortex late in life. The protein is Ly-6/neurotoxin-like protein 1 of Mus musculus (Mouse).